The primary structure comprises 463 residues: Ribulose bisphosphate carboxylase (463 aa).

Asparagine 116 contributes to the substrate binding site. Lysine 171 (proton acceptor) is an active-site residue. Lysine 173 provides a ligand contact to substrate. The Mg(2+) site is built by lysine 196, aspartate 198, and glutamate 199. Lysine 196 is subject to N6-carboxylysine. The Proton acceptor role is filled by histidine 294. Arginine 295, histidine 328, and serine 375 together coordinate substrate.

The protein belongs to the RuBisCO large chain family. Type II subfamily. Homodimer. It depends on Mg(2+) as a cofactor.

The enzyme catalyses 2 (2R)-3-phosphoglycerate + 2 H(+) = D-ribulose 1,5-bisphosphate + CO2 + H2O. The catalysed reaction is D-ribulose 1,5-bisphosphate + O2 = 2-phosphoglycolate + (2R)-3-phosphoglycerate + 2 H(+). In terms of biological role, ruBisCO catalyzes two reactions: the carboxylation of D-ribulose 1,5-bisphosphate, the primary event in carbon dioxide fixation, as well as the oxidative fragmentation of the pentose substrate. Both reactions occur simultaneously and in competition at the same active site. This is Ribulose bisphosphate carboxylase from Hydrogenovibrio marinus.